Here is a 900-residue protein sequence, read N- to C-terminus: UPF0182 protein Ppro_3567 (900 aa).

A run of 7 helical transmembrane segments spans residues 15-35 (FFPLLILVSVLLSLISYLLNL), 60-80 (GAGLLFGGLLFLFVQINLHVA), 112-132 (VSMLVSFVLALLAGNLGAMKW), 174-194 (FIILAAAALATAVYYVRGGIL), 210-230 (LAVLVGIFACAVAAGFYLDSF), 257-277 (VLTFLTPLAGAMLAIGIWKGV), and 282-302 (LLAPAIVVALYMLGIRVYPGV).

It belongs to the UPF0182 family.

It is found in the cell membrane. The polypeptide is UPF0182 protein Ppro_3567 (Pelobacter propionicus (strain DSM 2379 / NBRC 103807 / OttBd1)).